A 464-amino-acid chain; its full sequence is MAAAAASSCGGAGCGPHCSSSASAAAVEDAAAAAAEKVGRLSLSRECGKCGGGAAAVAVAGGLGLCGECFRANLLGKFKLAVTSNAMVRPTDSVLLAFSGGPASRVALQFIHEMRCKAIESWDVSNSQALPVFGVGVAFVDESVLCSKPRDEIEMAIEDIRSIVSSLSTGVKAMHIVRLEDVFSTESEDGERRLREAVDMIGDDTGREDFLRCLRMLSLQKIAMENGYAKIMLGSCASAIACHVLSATVKGQGYSLPADVQYVDTRWEIPVVLPLRDCLAQELTLLCELDSLKTQQHLDRPSNGINSLVASFIKRLREENPSREHTIVRTAQKLKPFSFNKFSADGYHDFLPSRLRPKFQKVDSDESTFSEILCLMCGSPFSESELQNLESTKHKAQKKIDLYTAHCCQSCYFQILPAGENLNEHFFSLLPKLWTGKMDTISDSHSLLRDQIEEYLLEENDDGN.

The protein belongs to the CTU2/NCS2 family.

Its subcellular location is the cytoplasm. The protein operates within tRNA modification; 5-methoxycarbonylmethyl-2-thiouridine-tRNA biosynthesis. Plays a central role in 2-thiolation of mcm(5)S(2)U at tRNA wobble positions of tRNA(Lys), tRNA(Glu) and tRNA(Gln). May act by forming a heterodimer with NCS6/CTU1 that ligates sulfur from thiocarboxylated URM1 onto the uridine of tRNAs at wobble position. The chain is Cytoplasmic tRNA 2-thiolation protein 2 from Oryza sativa subsp. indica (Rice).